The sequence spans 308 residues: GTP cyclohydrolase FolE2 (308 aa).

This sequence belongs to the GTP cyclohydrolase IV family.

The catalysed reaction is GTP + H2O = 7,8-dihydroneopterin 3'-triphosphate + formate + H(+). It functions in the pathway cofactor biosynthesis; 7,8-dihydroneopterin triphosphate biosynthesis; 7,8-dihydroneopterin triphosphate from GTP: step 1/1. Its function is as follows. Converts GTP to 7,8-dihydroneopterin triphosphate. This chain is GTP cyclohydrolase FolE2, found in Colwellia psychrerythraea (strain 34H / ATCC BAA-681) (Vibrio psychroerythus).